The sequence spans 723 residues: uncharacterized protein (723 aa).

The segment covering 1 to 12 (MTGKKKNRHQKK) has biased composition (basic residues). Disordered stretches follow at residues 1 to 166 (MTGK…EKEI), 181 to 212 (IKRK…SGWG), 268 to 289 (LPLS…DNDN), and 391 to 455 (KNKS…NTST). Over residues 30–42 (DETTTTTTTTTTT) the composition is skewed to low complexity. 2 stretches are compositionally biased toward basic and acidic residues: residues 45-129 (EETK…KTDD) and 149-166 (TDIK…EKEI). The stretch at 53 to 173 (IVENKDEDKK…KEIEDPNKKY (121 aa)) forms a coiled coil. Residues 181-190 (IKRKKEKKVK) are compositionally biased toward basic residues. Positions 193–204 (PVQPTPPVPAPA) are enriched in pro residues. Residues 272-288 (DTEDSDNDNDNGGDDND) show a composition bias toward acidic residues. A compositionally biased stretch (low complexity) spans 397–455 (DENNNNNNNNNQQQPQQQQTTSPTLSTSPTSPKSPTTTTTNTTTTTTTNTNNNNNNTST).

This is an uncharacterized protein from Dictyostelium discoideum (Social amoeba).